Consider the following 426-residue polypeptide: Glutamyl-tRNA reductase (426 aa).

Substrate is bound by residues 49–52 (TCNR), serine 109, 114–116 (EGQ), and glutamine 120. Cysteine 50 (nucleophile) is an active-site residue. NADP(+) is bound at residue 189–194 (GAGETG).

It belongs to the glutamyl-tRNA reductase family. In terms of assembly, homodimer.

It catalyses the reaction (S)-4-amino-5-oxopentanoate + tRNA(Glu) + NADP(+) = L-glutamyl-tRNA(Glu) + NADPH + H(+). Its pathway is porphyrin-containing compound metabolism; protoporphyrin-IX biosynthesis; 5-aminolevulinate from L-glutamyl-tRNA(Glu): step 1/2. It participates in porphyrin-containing compound metabolism; chlorophyll biosynthesis. Functionally, catalyzes the NADPH-dependent reduction of glutamyl-tRNA(Glu) to glutamate 1-semialdehyde (GSA). The polypeptide is Glutamyl-tRNA reductase (Chlorobium phaeobacteroides (strain BS1)).